The following is a 380-amino-acid chain: Phthiodiolone/phenolphthiodiolone dimycocerosates ketoreductase (380 aa).

Belongs to the mer family. Phthiodiolone/phenolphthiodiolone dimycocerosates ketoreductase subfamily.

Functionally, catalyzes the reduction of the keto moiety of phthiodiolone dimycocerosates (DIM B) and glycosylated phenolphthiodiolone dimycocerosates to form the intermediate compounds phthiotriol and glycosylated phenolphthiotriol dimycocerosates during phthiocerol dimycocerosates (DIM A) and glycosylated phenolphthiocerol dimycocerosates (PGL) biosynthesis. This Mycobacterium sp. (strain JLS) protein is Phthiodiolone/phenolphthiodiolone dimycocerosates ketoreductase.